Reading from the N-terminus, the 192-residue chain is Ion-translocating oxidoreductase complex subunit A (192 aa).

Transmembrane regions (helical) follow at residues 5-25 (LLLL…FLGL), 39-59 (IGMS…SYLV), 65-85 (LPFD…AVVV), 102-122 (ALGI…VALL), 134-154 (AIFG…FSAM), and 171-191 (AIAM…TGLV).

This sequence belongs to the NqrDE/RnfAE family. In terms of assembly, the complex is composed of six subunits: RnfA, RnfB, RnfC, RnfD, RnfE and RnfG.

The protein localises to the cell inner membrane. In terms of biological role, part of a membrane-bound complex that couples electron transfer with translocation of ions across the membrane. In Shewanella baltica (strain OS223), this protein is Ion-translocating oxidoreductase complex subunit A.